The chain runs to 133 residues: Histone H2A.1 (133 aa).

The disordered stretch occupies residues 1-23 (MSTTGKGGKAKGKTASSKQVSRS). At Ser-2 the chain carries N-acetylserine. Lys-6, Lys-9, Lys-11, Lys-13, and Lys-18 each carry N6-acetyllysine. Phosphoserine is present on Ser-123. Lys-124 participates in a covalent cross-link: Glycyl lysine isopeptide (Lys-Gly) (interchain with G-Cter in ubiquitin). A Phosphoserine modification is found at Ser-129.

The protein belongs to the histone H2A family. The nucleosome is a histone octamer containing two molecules each of H2A, H2B, H3 and H4 assembled in one H3-H4 heterotetramer and two H2A-H2B heterodimers. The octamer wraps approximately 147 bp of DNA. Post-translationally, monoubiquitination of Lys-124 gives a specific tag for epigenetic transcriptional repression. In terms of processing, acetylation occurs almost exclusively in the MAC.

It localises to the nucleus. It is found in the chromosome. Functionally, core component of nucleosome. Nucleosomes wrap and compact DNA into chromatin, limiting DNA accessibility to the cellular machineries which require DNA as a template. Histones thereby play a central role in transcription regulation, DNA repair, DNA replication and chromosomal stability. DNA accessibility is regulated via a complex set of post-translational modifications of histones, also called histone code, and nucleosome remodeling. The polypeptide is Histone H2A.1 (HTA2) (Tetrahymena pyriformis).